The primary structure comprises 168 residues: Pathogenesis-related protein 1A (168 aa).

The first 30 residues, 1 to 30 (MGFVLFSQLPSFLLVSTLLLFLVISHSCRA), serve as a signal peptide directing secretion. An SCP domain is found at 38 to 156 (LDAHNTARAD…NGGYVVSCNY (119 aa)).

The protein belongs to the CRISP family. Post-translationally, three disulfide bonds are present.

The protein resides in the vacuole. Its function is as follows. Probably involved in the defense reaction of plants against pathogens. The polypeptide is Pathogenesis-related protein 1A (Nicotiana tabacum (Common tobacco)).